We begin with the raw amino-acid sequence, 633 residues long: MATAEAQVNVNRNLQKQDLRNLEVSNLTPLSPEVISRQATINIGTIGHVAHGKSTVVKAISGVQTVRFKNELERNITIKLERLSEKKIKLLLKSKHQRHKYDIQQQKLLRILAERRKARAMTPLAPASVLAPSMETARPRLRSTSLNSLSPSNSSGYGSILGCDDSDQSSQLVLKPNVLKRRRSNCVQIPTPAAKRSRKNDGTTVKRRPKGEYIVEKIESVEVVQFQPVFFVKWLGYDVSANTWESYVNLSDCAEMEKFVERHLQLHQHYIAQITGELDTQLSDIPQTEDLKTISIAEIDAYDPLELQIDFILLAQYRAAASRSQREPERIGARALHRMQVRRSHFARRKQLIDLLLFEHRMNRVELPSPPIRVENNWDLDTIDSGFKYIQKNIIGEGVPKPQAGLVGCMCRHQSGEQCTASSMCCGRMAGEIFAYDRTTGRLRLRPGSAIYECNSRCSCDESCTNRVVQNGRKHPLVLFKTSNGSGWGVRTPQPLKKGVFVCEYIGEIITCEEANERGKAYDDNGRTYLFDLDYNTSRDSEYTVDAANFGNISHFINHSCDPNLAVFPCWIEHLNTALPHLVFFTIRPIKAGEELSFDYIRADNEEVPYENLSTAARVQCRCGAANCRKVLF.

Residues 213–271 enclose the Chromo domain; it reads YIVEKIESVEVVQFQPVFFVKWLGYDVSANTWESYVNLSDCAEMEKFVERHLQLHQHYI. Residues 407-472 enclose the Pre-SET domain; that stretch reads VGCMCRHQSG…SCTNRVVQNG (66 aa). Positions 409, 411, 419, 425, 426, 454, 458, 460, and 464 each coordinate Zn(2+). The region spanning 475-601 is the SET domain; the sequence is HPLVLFKTSN…AGEELSFDYI (127 aa). Residues 486–488, tyrosine 529, and 558–559 each bind S-adenosyl-L-methionine; these read SGW and NH. Residues cysteine 561, cysteine 621, cysteine 623, and cysteine 628 each contribute to the Zn(2+) site. The 17-residue stretch at 617 to 633 folds into the Post-SET domain; the sequence is ARVQCRCGAANCRKVLF.

This sequence belongs to the class V-like SAM-binding methyltransferase superfamily. Histone-lysine methyltransferase family. Suvar3-9 subfamily. In terms of assembly, interacts with Su(var)205 and Su(var)3-7. Probably associates with HDAC1/Rpd3.

Its subcellular location is the nucleus. The protein resides in the chromosome. It is found in the centromere. The catalysed reaction is L-lysyl(9)-[histone H3] + 3 S-adenosyl-L-methionine = N(6),N(6),N(6)-trimethyl-L-lysyl(9)-[histone H3] + 3 S-adenosyl-L-homocysteine + 3 H(+). Its function is as follows. Histone methyltransferase that specifically trimethylates 'Lys-9' of histone H3 using monomethylated H3 'Lys-9' as substrate. H3 'Lys-9' trimethylation represents a specific tag for epigenetic transcriptional repression by recruiting Su(var)205/HP1 to methylated histones. Mainly functions in heterochromatin regions, thereby playing a central role in the establishment of constitutive heterochromatin at pericentric regions. Involved in heterochromatic gene silencing including the modification of position-effect-variegation. The protein is Histone-lysine N-methyltransferase Su(var)3-9 (Su(var)3-9) of Drosophila pseudoobscura pseudoobscura (Fruit fly).